The chain runs to 193 residues: Signal peptidase I (193 aa).

Topologically, residues 1-25 (MTEEQKPTSEKSVKRKSNTYWEWGK) are cytoplasmic. A helical membrane pass occupies residues 26-42 (AIIIAVALALLIRHFLF). Residues 43–193 (EPYLVEGSSM…FPFHDMRQTK (151 aa)) lie on the Extracellular side of the membrane. Active-site residues include S51 and K93.

It belongs to the peptidase S26 family.

It is found in the cell membrane. The enzyme catalyses Cleavage of hydrophobic, N-terminal signal or leader sequences from secreted and periplasmic proteins.. The protein is Signal peptidase I (sipS2) of Bacillus amyloliquefaciens (Bacillus velezensis).